The chain runs to 252 residues: Fructose-1,6-bisphosphatase/inositol-1-monophosphatase (252 aa).

Residues glutamate 65, aspartate 81, isoleucine 83, and aspartate 84 each coordinate Mg(2+). Substrate contacts are provided by residues 84–86, arginine 170, phenylalanine 175, and arginine 194; that span reads DGS. A Mg(2+)-binding site is contributed by aspartate 201.

The protein belongs to the inositol monophosphatase superfamily. FBPase class 4 family. Homodimer. Mg(2+) serves as cofactor.

The catalysed reaction is beta-D-fructose 1,6-bisphosphate + H2O = beta-D-fructose 6-phosphate + phosphate. It carries out the reaction a myo-inositol phosphate + H2O = myo-inositol + phosphate. Its activity is regulated as follows. IMPase activity is inhibited by Ca(2+) and Zn(2+). In contrast to mammalian I-1-P phosphatases, is not inhibited by Li(+) up to 100 mM. Phosphatase with broad specificity; it can dephosphorylate fructose 1,6-bisphosphate, both D and L isomers of inositol-1-phosphate (I-1-P), 2'-AMP, pNPP, beta-glycerol phosphate, and alpha-D-glucose-1-phosphate. Cannot hydrolyze glucose-6-phosphate, fructose-6-phosphate, NAD(+) or 5'-AMP. May be involved in the biosynthesis of a unique osmolyte, di-myo-inositol 1,1-phosphate. The chain is Fructose-1,6-bisphosphatase/inositol-1-monophosphatase (suhB) from Methanocaldococcus jannaschii (strain ATCC 43067 / DSM 2661 / JAL-1 / JCM 10045 / NBRC 100440) (Methanococcus jannaschii).